The chain runs to 288 residues: Probable endonuclease 4 (288 aa).

Zn(2+) is bound by residues His75, His115, Glu153, Asp187, His190, His224, Asp237, His239, and Glu269.

It belongs to the AP endonuclease 2 family. The cofactor is Zn(2+).

The catalysed reaction is Endonucleolytic cleavage to 5'-phosphooligonucleotide end-products.. Its function is as follows. Endonuclease IV plays a role in DNA repair. It cleaves phosphodiester bonds at apurinic or apyrimidinic (AP) sites, generating a 3'-hydroxyl group and a 5'-terminal sugar phosphate. The sequence is that of Probable endonuclease 4 from Chlamydia muridarum (strain MoPn / Nigg).